A 433-amino-acid chain; its full sequence is Glutamate-1-semialdehyde 2,1-aminomutase (433 aa).

K273 bears the N6-(pyridoxal phosphate)lysine mark.

Belongs to the class-III pyridoxal-phosphate-dependent aminotransferase family. HemL subfamily. In terms of assembly, homodimer. It depends on pyridoxal 5'-phosphate as a cofactor.

It localises to the cytoplasm. It carries out the reaction (S)-4-amino-5-oxopentanoate = 5-aminolevulinate. It participates in porphyrin-containing compound metabolism; protoporphyrin-IX biosynthesis; 5-aminolevulinate from L-glutamyl-tRNA(Glu): step 2/2. The protein operates within porphyrin-containing compound metabolism; chlorophyll biosynthesis. The polypeptide is Glutamate-1-semialdehyde 2,1-aminomutase (Microcystis aeruginosa (strain NIES-843 / IAM M-2473)).